Consider the following 354-residue polypeptide: Photosystem II D2 protein (354 aa).

Threonine 2 is subject to N-acetylthreonine. Phosphothreonine is present on threonine 2. Residues 42 to 62 (CAYFALGGWFTGTTFVTSWYT) traverse the membrane as a helical segment. Position 119 (histidine 119) interacts with chlorophyll a. The chain crosses the membrane as a helical span at residues 126–142 (GFMLRQFELARSVQLRP). Residues glutamine 131 and asparagine 144 each coordinate pheophytin a. The helical transmembrane segment at 154-167 (VFVSVFLIYPLGQS) threads the bilayer. Histidine 199 lines the chlorophyll a pocket. A helical membrane pass occupies residues 209-229 (AALLCAIHGATVENTLFEDGD). Residues histidine 216 and phenylalanine 263 each contribute to the a plastoquinone site. Position 216 (histidine 216) interacts with Fe cation. Position 270 (histidine 270) interacts with Fe cation. Residues 280 to 296 (GLWMSALGVVGLALNLR) traverse the membrane as a helical segment.

Belongs to the reaction center PufL/M/PsbA/D family. In terms of assembly, PSII is composed of 1 copy each of membrane proteins PsbA, PsbB, PsbC, PsbD, PsbE, PsbF, PsbH, PsbI, PsbJ, PsbK, PsbL, PsbM, PsbT, PsbX, PsbY, PsbZ, Psb30/Ycf12, at least 3 peripheral proteins of the oxygen-evolving complex and a large number of cofactors. It forms dimeric complexes. It depends on The D1/D2 heterodimer binds P680, chlorophylls that are the primary electron donor of PSII, and subsequent electron acceptors. It shares a non-heme iron and each subunit binds pheophytin, quinone, additional chlorophylls, carotenoids and lipids. There is also a Cl(-1) ion associated with D1 and D2, which is required for oxygen evolution. The PSII complex binds additional chlorophylls, carotenoids and specific lipids. as a cofactor.

Its subcellular location is the plastid. It localises to the chloroplast thylakoid membrane. It carries out the reaction 2 a plastoquinone + 4 hnu + 2 H2O = 2 a plastoquinol + O2. Photosystem II (PSII) is a light-driven water:plastoquinone oxidoreductase that uses light energy to abstract electrons from H(2)O, generating O(2) and a proton gradient subsequently used for ATP formation. It consists of a core antenna complex that captures photons, and an electron transfer chain that converts photonic excitation into a charge separation. The D1/D2 (PsbA/PsbD) reaction center heterodimer binds P680, the primary electron donor of PSII as well as several subsequent electron acceptors. D2 is needed for assembly of a stable PSII complex. In Piper cenocladum (Ant piper), this protein is Photosystem II D2 protein.